The sequence spans 122 residues: Large ribosomal subunit protein uL14 (122 aa).

Belongs to the universal ribosomal protein uL14 family. Part of the 50S ribosomal subunit. Forms a cluster with proteins L3 and L19. In the 70S ribosome, L14 and L19 interact and together make contacts with the 16S rRNA in bridges B5 and B8.

Functionally, binds to 23S rRNA. Forms part of two intersubunit bridges in the 70S ribosome. This Stenotrophomonas maltophilia (strain R551-3) protein is Large ribosomal subunit protein uL14.